The primary structure comprises 333 residues: Eukaryotic translation initiation factor 3 subunit I (333 aa).

WD repeat units follow at residues 8–47 (GHERSITQIKYNREGDLLFTVAKDPIVNVWYSVNGERLGT), 50–91 (GHTG…ALLK), 144–183 (CNDSKITSAVWGPLGECIIAGHESGELNQYSAKSGEVLVN), and 186–225 (EHSRQINDIQLSREMTMFVTASKDNTAKLFDSTTLEHQKT). The residue at position 219 (threonine 219) is a Phosphothreonine. Position 264 is an N6-acetyllysine (lysine 264). Lysine 282 participates in a covalent cross-link: Glycyl lysine isopeptide (Lys-Gly) (interchain with G-Cter in ubiquitin). A WD 5 repeat occupies 283-324 (GHFGPINSVAFHPDGKSYSSGGEDGYVRIHYFDPQYFEFEFE). Residue tyrosine 308 is modified to Phosphotyrosine.

This sequence belongs to the eIF-3 subunit I family. Component of the eukaryotic translation initiation factor 3 (eIF-3) complex, which is composed of 13 subunits: EIF3A, EIF3B, EIF3C, EIF3D, EIF3E, EIF3F, EIF3G, EIF3H, EIF3I, EIF3J, EIF3K, EIF3L and EIF3M. The eIF-3 complex appears to include 3 stable modules: module A is composed of EIF3A, EIF3B, EIF3G and EIF3I; module B is composed of EIF3F, EIF3H, and EIF3M; and module C is composed of EIF3C, EIF3D, EIF3E, EIF3K and EIF3L. EIF3C of module C binds EIF3B of module A and EIF3H of module B, thereby linking the three modules. EIF3J is a labile subunit that binds to the eIF-3 complex via EIF3B. The eIF-3 complex interacts with RPS6KB1 under conditions of nutrient depletion. Mitogenic stimulation leads to binding and activation of a complex composed of MTOR and RPTOR, leading to phosphorylation and release of RPS6KB1 and binding of EIF4B to eIF-3. Post-translationally, phosphorylated by TGF-beta type II receptor.

Its subcellular location is the cytoplasm. Its function is as follows. Component of the eukaryotic translation initiation factor 3 (eIF-3) complex, which is required for several steps in the initiation of protein synthesis. The eIF-3 complex associates with the 40S ribosome and facilitates the recruitment of eIF-1, eIF-1A, eIF-2:GTP:methionyl-tRNAi and eIF-5 to form the 43S pre-initiation complex (43S PIC). The eIF-3 complex stimulates mRNA recruitment to the 43S PIC and scanning of the mRNA for AUG recognition. The eIF-3 complex is also required for disassembly and recycling of post-termination ribosomal complexes and subsequently prevents premature joining of the 40S and 60S ribosomal subunits prior to initiation. The eIF-3 complex specifically targets and initiates translation of a subset of mRNAs involved in cell proliferation, including cell cycling, differentiation and apoptosis, and uses different modes of RNA stem-loop binding to exert either translational activation or repression. The protein is Eukaryotic translation initiation factor 3 subunit I of Oryctolagus cuniculus (Rabbit).